The following is a 317-amino-acid chain: Small ribosomal subunit biogenesis GTPase RsgA (317 aa).

A CP-type G domain is found at 88–249 (DQYKSKLFAA…LIDSPGFQEF (162 aa)). GTP is bound by residues 136–139 (NKID) and 190–198 (GQSGMGKST). Residues Cys-273, Cys-278, His-280, and Cys-286 each contribute to the Zn(2+) site.

It belongs to the TRAFAC class YlqF/YawG GTPase family. RsgA subfamily. Monomer. Associates with 30S ribosomal subunit, binds 16S rRNA. Zn(2+) is required as a cofactor.

Its subcellular location is the cytoplasm. In terms of biological role, one of several proteins that assist in the late maturation steps of the functional core of the 30S ribosomal subunit. Helps release RbfA from mature subunits. May play a role in the assembly of ribosomal proteins into the subunit. Circularly permuted GTPase that catalyzes slow GTP hydrolysis, GTPase activity is stimulated by the 30S ribosomal subunit. The sequence is that of Small ribosomal subunit biogenesis GTPase RsgA from Paraburkholderia phymatum (strain DSM 17167 / CIP 108236 / LMG 21445 / STM815) (Burkholderia phymatum).